We begin with the raw amino-acid sequence, 178 residues long: Aspartic proteinase nepenthesin-2 (178 aa).

Residue Asp-98 is part of the active site.

This sequence belongs to the peptidase A1 family.

It is found in the secreted. The enzyme catalyses Similar to pepsin, but also cleaves on either side of Asp and at Lys-|-Arg.. With respect to regulation, inhibited by pepstatin and by diazoacetyl-D,L-norleucine methyl ester (DAN) in the presence of Cu(2+) ions. Its function is as follows. Extracellular proteinase found in the pitcher fluid of carnivorous plants. Digest prey for nitrogen uptake. This is Aspartic proteinase nepenthesin-2 from Nepenthes distillatoria (Pitcher plant).